The chain runs to 251 residues: uncharacterized protein (251 aa).

This is an uncharacterized protein from Caenorhabditis elegans.